Here is a 143-residue protein sequence, read N- to C-terminus: Brain ribonuclease (143 aa).

The segment at 1 to 21 (KESAAAKFRRQHMDSGSSSSG) is disordered. Residues Lys7 and Arg10 each coordinate substrate. Residue His12 is the Proton acceptor of the active site. 4 cysteine pairs are disulfide-bonded: Cys26/Cys84, Cys40/Cys95, Cys58/Cys110, and Cys65/Cys72. 41 to 45 (KPVNT) lines the substrate pocket. The N-linked (GlcNAc...) asparagine glycan is linked to Asn62. The substrate site is built by Lys66 and Arg85. Catalysis depends on His119, which acts as the Proton donor. O-linked (GalNAc...) threonine glycosylation occurs at Thr129. The O-linked (GalNAc...) serine glycan is linked to Ser133.

Belongs to the pancreatic ribonuclease family.

The protein localises to the secreted. This chain is Brain ribonuclease (BRN), found in Ovis aries (Sheep).